A 501-amino-acid polypeptide reads, in one-letter code: Rhazimal synthase (501 aa).

A helical transmembrane segment spans residues 4–24; sequence MQLSFASAVVYSLIFFVFLLV. N282 carries an N-linked (GlcNAc...) asparagine glycan. Heme is bound at residue C442.

The protein belongs to the cytochrome P450 family. Heme serves as cofactor.

It localises to the membrane. The catalysed reaction is (19E)-geissoschizine + reduced [NADPH--hemoprotein reductase] + O2 = rhazimal + oxidized [NADPH--hemoprotein reductase] + 2 H2O + H(+). The enzyme catalyses (19E)-geissoschizine + reduced [NADPH--hemoprotein reductase] + O2 = akuammicine + formate + oxidized [NADPH--hemoprotein reductase] + H2O + H(+). It functions in the pathway alkaloid biosynthesis. Its function is as follows. A cytochrome P450 monooxygenase involved in the biosynthesis of akuammilan monoterpene indole alkaloids (MIAs) natural products, components with various biological properties such as antidiabetic, antibacterial, anti-inflammatory, anticancer, and antimalarial activities. Catalyzes the conversion of geissoschizine to rhazimal. Can also, with lower efficiency, support the conversion of geissoschizine to akuammicine. The chain is Rhazimal synthase from Alstonia scholaris (Dogbane).